Consider the following 428-residue polypeptide: 47 kDa outer membrane protein (428 aa).

Residues 1–25 (MAKTSKFTQTLLASALAVVAGSASA) form the signal peptide.

This sequence belongs to the OmpP1/FadL family.

It is found in the cell outer membrane. In Pasteurella multocida (strain Pm70), this protein is 47 kDa outer membrane protein.